Reading from the N-terminus, the 235-residue chain is Small ribosomal subunit protein uS2c (235 aa).

This sequence belongs to the universal ribosomal protein uS2 family.

It is found in the plastid. In Euglena longa (Euglenophycean alga), this protein is Small ribosomal subunit protein uS2c (rps2).